The primary structure comprises 355 residues: Methionine import ATP-binding protein MetN 1 (355 aa).

The ABC transporter domain maps to Ile6–Val245. Position 42-49 (Gly42–Ser49) interacts with ATP.

This sequence belongs to the ABC transporter superfamily. Methionine importer (TC 3.A.1.24) family. In terms of assembly, the complex is composed of two ATP-binding proteins (MetN), two transmembrane proteins (MetI) and a solute-binding protein (MetQ).

The protein resides in the cell membrane. It carries out the reaction L-methionine(out) + ATP + H2O = L-methionine(in) + ADP + phosphate + H(+). The enzyme catalyses D-methionine(out) + ATP + H2O = D-methionine(in) + ADP + phosphate + H(+). Part of the ABC transporter complex MetNIQ involved in methionine import. Responsible for energy coupling to the transport system. This Lactiplantibacillus plantarum (strain ATCC BAA-793 / NCIMB 8826 / WCFS1) (Lactobacillus plantarum) protein is Methionine import ATP-binding protein MetN 1.